The following is a 375-amino-acid chain: MATVCVVGSGILGLAVASCLLEKTNVNIVIISDDFPHESSHDLKYSPFFTSPWAGAHFRPFPSVTEFDQRHVEYTRATYGHFKKLAAFEPQEETSIRFLEGTDLVERGHPNFEYYSELKQGYREEIEDFVVNDWEHGFSASYKTWVLNAPFFLSYLFKKLRSNPRVTLKQGKLNTLREAFTENAAKNDQSPDLGANGYNYVFNCTGLGLQMNGGWDPACYVIRGQTLLLKVPSGPHLQKTVTHQSKEGQWTFFIPRPLSNPESPTEDYVILGGTKQEKDFDSGSPRSQDSLDILTRADRLFPELKDAKTGHFQVIQPNVGFRPSRKGGVRVEREKVPDVENSFAYHCYGAGGMGYELSFGVAFAVVDLFLDDYNQ.

The N-terminal stretch at 1 to 17 (MATVCVVGSGILGLAVA) is a signal peptide. Residues serine 9, leucine 12, aspartate 34, serine 51, and glycine 55 each contribute to the FAD site. Asparagine 203 carries N-linked (GlcNAc...) asparagine glycosylation. 3 residues coordinate FAD: arginine 322, glycine 354, and tyrosine 355.

This sequence belongs to the DAMOX/DASOX family. Requires FAD as cofactor.

It catalyses the reaction D-aspartate + O2 + H2O = oxaloacetate + H2O2 + NH4(+). It carries out the reaction D-glutamate + O2 + H2O = H2O2 + 2-oxoglutarate + NH4(+). Selectively catalyzes the oxidative deamination of acidic amino acids. Protects the organism from the toxicity of D-amino acids. Enables the organism to utilize D-amino acids as a source of nutrients. Enables the organism to utilize D-aspartate as a nitrogen source. This is D-aspartate oxidase (DDO) from Komagataella phaffii (strain GS115 / ATCC 20864) (Yeast).